A 609-amino-acid polypeptide reads, in one-letter code: 1-deoxy-D-xylulose-5-phosphate synthase (609 aa).

Thiamine diphosphate-binding positions include His77 and 118–120 (GHS). Position 149 (Asp149) interacts with Mg(2+). Residues 150 to 151 (GA), Asn178, Tyr259, and Glu342 contribute to the thiamine diphosphate site. Position 178 (Asn178) interacts with Mg(2+).

This sequence belongs to the transketolase family. DXPS subfamily. As to quaternary structure, homodimer. It depends on Mg(2+) as a cofactor. Thiamine diphosphate is required as a cofactor.

The enzyme catalyses D-glyceraldehyde 3-phosphate + pyruvate + H(+) = 1-deoxy-D-xylulose 5-phosphate + CO2. It participates in metabolic intermediate biosynthesis; 1-deoxy-D-xylulose 5-phosphate biosynthesis; 1-deoxy-D-xylulose 5-phosphate from D-glyceraldehyde 3-phosphate and pyruvate: step 1/1. Catalyzes the acyloin condensation reaction between C atoms 2 and 3 of pyruvate and glyceraldehyde 3-phosphate to yield 1-deoxy-D-xylulose-5-phosphate (DXP). In Listeria monocytogenes serotype 4b (strain CLIP80459), this protein is 1-deoxy-D-xylulose-5-phosphate synthase.